Reading from the N-terminus, the 956-residue chain is Translation initiation factor IF-2 (956 aa).

The disordered stretch occupies residues 68 to 357 (APEAAAPKAP…GVSVPRGDGN (290 aa)). Composition is skewed to low complexity over residues 86–123 (AKPA…APAV), 141–156 (PGNN…PRAG), 164–175 (PAAAPASGAGRP), and 212–235 (GPRP…RPAA). Composition is skewed to gly residues over residues 236 to 257 (GSGG…GGGN) and 276 to 324 (RGAG…GAGR). Basic residues predominate over residues 325-334 (GKQRKSKRAK). Positions 449–620 (ARPPVVTVMG…AVMLTADAAL (172 aa)) constitute a tr-type G domain. The segment at 458 to 465 (GHVDHGKT) is G1. Position 458 to 465 (458 to 465 (GHVDHGKT)) interacts with GTP. A G2 region spans residues 483-487 (GITQH). The G3 stretch occupies residues 508–511 (DTPG). GTP is bound by residues 508–512 (DTPGH) and 562–565 (NKID). The segment at 562 to 565 (NKID) is G4. The tract at residues 598–600 (SAR) is G5.

The protein belongs to the TRAFAC class translation factor GTPase superfamily. Classic translation factor GTPase family. IF-2 subfamily.

The protein localises to the cytoplasm. One of the essential components for the initiation of protein synthesis. Protects formylmethionyl-tRNA from spontaneous hydrolysis and promotes its binding to the 30S ribosomal subunits. Also involved in the hydrolysis of GTP during the formation of the 70S ribosomal complex. The protein is Translation initiation factor IF-2 of Renibacterium salmoninarum (strain ATCC 33209 / DSM 20767 / JCM 11484 / NBRC 15589 / NCIMB 2235).